The following is a 151-amino-acid chain: SsrA-binding protein (151 aa).

Residues 132-151 form a disordered region; it reads KRQTIKKRDQDREIHRKYGI.

Belongs to the SmpB family.

It localises to the cytoplasm. Its function is as follows. Required for rescue of stalled ribosomes mediated by trans-translation. Binds to transfer-messenger RNA (tmRNA), required for stable association of tmRNA with ribosomes. tmRNA and SmpB together mimic tRNA shape, replacing the anticodon stem-loop with SmpB. tmRNA is encoded by the ssrA gene; the 2 termini fold to resemble tRNA(Ala) and it encodes a 'tag peptide', a short internal open reading frame. During trans-translation Ala-aminoacylated tmRNA acts like a tRNA, entering the A-site of stalled ribosomes, displacing the stalled mRNA. The ribosome then switches to translate the ORF on the tmRNA; the nascent peptide is terminated with the 'tag peptide' encoded by the tmRNA and targeted for degradation. The ribosome is freed to recommence translation, which seems to be the essential function of trans-translation. In Lactobacillus johnsonii (strain CNCM I-12250 / La1 / NCC 533), this protein is SsrA-binding protein.